The following is a 250-amino-acid chain: Replicating protein (250 aa).

Disordered regions lie at residues 1–23 (MFQQ…PCEK) and 168–250 (KAHM…KAFE). 2 stretches are compositionally biased toward basic and acidic residues: residues 13–23 (GTDEPAHPCEK) and 178–190 (DRLR…RTRA). A compositionally biased stretch (polar residues) spans 218–237 (SRCSFTTPNRPRRTLPSSHP).

Its function is as follows. Required for replication. It likely regulates pTAR copy number. In Rhizobium radiobacter (Agrobacterium tumefaciens), this protein is Replicating protein (repA).